The following is a 576-amino-acid chain: Probable DNA ligase (576 aa).

Glutamate 235 is an ATP binding site. The N6-AMP-lysine intermediate role is filled by lysine 237. Residues arginine 242, arginine 257, glutamate 285, phenylalanine 324, arginine 422, and lysine 428 each coordinate ATP.

Belongs to the ATP-dependent DNA ligase family. Mg(2+) is required as a cofactor.

The catalysed reaction is ATP + (deoxyribonucleotide)n-3'-hydroxyl + 5'-phospho-(deoxyribonucleotide)m = (deoxyribonucleotide)n+m + AMP + diphosphate.. Functionally, DNA ligase that seals nicks in double-stranded DNA during DNA replication, DNA recombination and DNA repair. This chain is Probable DNA ligase, found in Koribacter versatilis (strain Ellin345).